A 291-amino-acid chain; its full sequence is Gamma-sarcoglycan (291 aa).

Residues 38–58 traverse the membrane as a helical; Signal-anchor for type II membrane protein segment; the sequence is LFVLLLLIILLVNFALTIWIL. Residues 59–291 lie on the Extracellular side of the membrane; that stretch reads KVMWFSPTGM…TCHEHSHICL (233 aa). Residue asparagine 110 is glycosylated (N-linked (GlcNAc...) asparagine). Disulfide bonds link cysteine 265-cysteine 290 and cysteine 267-cysteine 283.

The protein belongs to the sarcoglycan beta/delta/gamma/zeta family. In terms of assembly, interacts with the syntrophin SNTA1. Cross-link to form 2 major subcomplexes: one consisting of SGCB, SGCD and SGCG and the other consisting of SGCB and SGCD. The association between SGCB and SGCG is particularly strong while SGCA is loosely associated with the other sarcoglycans. Interacts with FLNC. In terms of processing, disulfide bonds are present.

It is found in the cell membrane. The protein resides in the sarcolemma. The protein localises to the cytoplasm. It localises to the cytoskeleton. Component of the sarcoglycan complex, a subcomplex of the dystrophin-glycoprotein complex which forms a link between the F-actin cytoskeleton and the extracellular matrix. In Canis lupus familiaris (Dog), this protein is Gamma-sarcoglycan (SGCG).